The sequence spans 141 residues: Nucleoside triphosphatase NudI (141 aa).

The Nudix hydrolase domain occupies 1-141 (MRQRTIVCPI…RLTFTQKGLL (141 aa)). Residues 38 to 59 (GGMEPGETMEEALRREIREELG) carry the Nudix box motif.

This sequence belongs to the Nudix hydrolase family. NudI subfamily. In terms of assembly, monomer. Requires Mg(2+) as cofactor.

The catalysed reaction is a ribonucleoside 5'-triphosphate + H2O = a ribonucleoside 5'-phosphate + diphosphate + H(+). It carries out the reaction a 2'-deoxyribonucleoside 5'-triphosphate + H2O = a 2'-deoxyribonucleoside 5'-phosphate + diphosphate + H(+). The enzyme catalyses dUTP + H2O = dUMP + diphosphate + H(+). It catalyses the reaction dTTP + H2O = dTMP + diphosphate + H(+). The catalysed reaction is dCTP + H2O = dCMP + diphosphate + H(+). Catalyzes the hydrolysis of nucleoside triphosphates, with a preference for pyrimidine deoxynucleoside triphosphates (dUTP, dTTP and dCTP). The protein is Nucleoside triphosphatase NudI of Enterobacter sp. (strain 638).